The following is a 539-amino-acid chain: MTLRSKMTKYIFVTGGVVSGLGKGVSAASIGNLLKHRGFKIFVLKLDPYLNIDPGVMSPYEHGEVYVTADGGETDLDLGHYERFIDVELSKDSNYTSGKIFSNLFTQERNGNFLGKTVQLIPHFTNEILNTIEKIATKHKPDFMIVEIGGTIGDIESNSFIYAMAELALAKPDRFFLVHVTYVIFLEASNEFKSKPTQVSINSLRSFGISPNLVLLRNSKMVPDNIVEKIAKKSVLNKDYVISVPDMKNIYEAPLYFESQNIAQIILSHFKIKDIEPDLSKWNKLVDSIKKPKAYKAKILMVGKYVEFLDAYKSIIEAFKVSSYEENIDLKMDWVDSSKLELTNLDEFLKGYDGVVILPGFGIRGWEQKVRIAQYTRENKIPTFGICLGFQAMSVAHARMKGIKNANSREFANDKNDETYILDLIQGKAKDKNLGGTLRLGNYTTTIKENTLAKKIYQKDQVIERHRHRYEINSKYIDLLEDEEFVFSGIWNEGKLAEICEVKNHPFYLGVQYHPEFTSRPLKPNPLFTSFLRVLIKNN.

The segment at 1 to 272 (MTLRSKMTKY…AQIILSHFKI (272 aa)) is amidoligase domain. A CTP-binding site is contributed by serine 19. Residue serine 19 participates in UTP binding. Residue 20–25 (GLGKGV) participates in ATP binding. Position 60 (tyrosine 60) interacts with L-glutamine. Aspartate 77 is a binding site for ATP. Residues aspartate 77 and glutamate 147 each contribute to the Mg(2+) site. CTP-binding positions include 154 to 156 (DIE), 193 to 198 (KSKPTQ), and lysine 229. UTP contacts are provided by residues 193–198 (KSKPTQ) and lysine 229. A Glutamine amidotransferase type-1 domain is found at 298-539 (KILMVGKYVE…SFLRVLIKNN (242 aa)). Glycine 360 lines the L-glutamine pocket. Cysteine 387 acts as the Nucleophile; for glutamine hydrolysis in catalysis. Residues 388–391 (LGFQ), glutamate 410, and arginine 469 each bind L-glutamine. Active-site residues include histidine 514 and glutamate 516.

Belongs to the CTP synthase family. As to quaternary structure, homotetramer.

The catalysed reaction is UTP + L-glutamine + ATP + H2O = CTP + L-glutamate + ADP + phosphate + 2 H(+). It catalyses the reaction L-glutamine + H2O = L-glutamate + NH4(+). It carries out the reaction UTP + NH4(+) + ATP = CTP + ADP + phosphate + 2 H(+). It participates in pyrimidine metabolism; CTP biosynthesis via de novo pathway; CTP from UDP: step 2/2. Allosterically activated by GTP, when glutamine is the substrate; GTP has no effect on the reaction when ammonia is the substrate. The allosteric effector GTP functions by stabilizing the protein conformation that binds the tetrahedral intermediate(s) formed during glutamine hydrolysis. Inhibited by the product CTP, via allosteric rather than competitive inhibition. Catalyzes the ATP-dependent amination of UTP to CTP with either L-glutamine or ammonia as the source of nitrogen. Regulates intracellular CTP levels through interactions with the four ribonucleotide triphosphates. The sequence is that of CTP synthase from Mycoplasmopsis pulmonis (strain UAB CTIP) (Mycoplasma pulmonis).